The chain runs to 628 residues: Cystathionine gamma-synthase-like enzyme iboG2 (628 aa).

Substrate is bound at residue Tyr313. Residue Lys417 is modified to N6-(pyridoxal phosphate)lysine.

Belongs to the trans-sulfuration enzymes family. Pyridoxal 5'-phosphate is required as a cofactor.

The protein operates within secondary metabolite biosynthesis. Its function is as follows. Cystathionine gamma-synthase-like enzyme; part of the gene cluster that mediates the biosynthesis of the psychoactive metabolites ibotenic acid and muscimol. The first committed step is glutamate hydroxylation by the 2-oxoglutarate-dependent dioxygenase iboH, and the last step is decarboxylation of ibotenic acid to muscimol by the decarboxylase iboD. The order of the intermediate reactions is somewhat ambiguous. IboA likely activates the carboxylic acid at position 5 to introduce an amide bond, and the flavin monooxygenase iboF generates the N-O bond. There are several options for the latter step. One option is that iboF directly hydroxylates the amide nitrogen formed by iboA to produce a hydroxamic acid species. Another option is that iboF hydroxylates an external N-containing compound, whose resulting N-O bond is subsequently introduced into the hydroxyglutamate scaffold. The paralogous PLP-dependent cystathionine gamma-synthase-like enzymes iboG1 and iboG2 are likely involved in substitution of the OH group at position 3 by the O-N moiety. The first cyclic intermediate is most probably tricholomic acid which is likely desaturated to ibotenic acid by the cytochrome P450 monooxygenase iboC. In Amanita muscaria (strain Koide BX008), this protein is Cystathionine gamma-synthase-like enzyme iboG2.